Reading from the N-terminus, the 95-residue chain is Alpha-conotoxin GeXXA (95 aa).

Residues 1–21 form the signal peptide; the sequence is MPKQEKMMLVLLILPLPYCNA. Residues 22-45 constitute a propeptide that is removed on maturation; that stretch reads AGVTTVQWGGHGDGLDRYLQRGVR. 4 disulfide bridges follow: C64-C73, C69-C81, C74-C91, and C79-C93.

Belongs to the conotoxin D superfamily. Homodimer. Pseudo-homodimer (identical sequence, different post-translational modifications). Expressed by the venom duct.

Its subcellular location is the secreted. Its function is as follows. Alpha-D-conopeptides act as non-competitive inhibitors of nicotinic acetylcholine receptors (nAChR). Through its two C-terminal domains, this homodimeric protein would bind to two nAChR allosteric sites, located outside the nAChR C-loop of the principal binding face and at the adjacent binding interface in a clockwise direction. This toxin has strong inhibitory activity on rat alpha-9-alpha-10 (CHRNA9-CHRNA10) (IC(50)=1.2 nM) and a moderate inhibitory activity on human alpha-7 (CHRNA7) (IC(50)=210 nM), rat alpha-3-beta-2 (CHRNA3-CHRNB2) (IC(50)=498 nM), rat alpha-3-beta-4 (CHRNA3-CHRNB4) (IC(50)=614 nM) and rat alpha-1-beta-1-delta-epsilon (CHRNA1-CHRNB1-CHRNE-CHRND) (IC(50)=743 nM) subtypes. Shows a weaker inhibitory activity on human alpha-9-alpha-10 (IC(50)=28 nM) than on the rat channel. This is explained by a different residue in the probable binding site (His-31 in rat alpha-10 and Leu-31 in human). This chain is Alpha-conotoxin GeXXA, found in Conus generalis (General cone).